The chain runs to 990 residues: Aconitate hydratase 3, mitochondrial (990 aa).

The N-terminal 78 residues, 1-78, are a transit peptide targeting the mitochondrion; it reads MYLTASSSAS…PFRFTSQIRA (78 aa). Ser-91 carries the phosphoserine modification. Substrate contacts are provided by residues Gln-182 and 301–303; that span reads DSH. [4Fe-4S] cluster contacts are provided by Cys-533, Cys-599, and Cys-602. Residues Arg-632, Arg-637, Arg-795, and 876-877 contribute to the substrate site; that span reads SR.

This sequence belongs to the aconitase/IPM isomerase family. As to quaternary structure, monomer. Interacts with B'GAMMA in the cytosol. It depends on [4Fe-4S] cluster as a cofactor. Phosphorylated at Ser-91 in the cytoplasm; this phosphorylation requires the presence of B'GAMMA. As to expression, major aconitase isoenzyme in young seedlings. Expressed in roots, leaves, stems and flowers, and, at low levels, in seeds.

The protein localises to the mitochondrion. The protein resides in the cytoplasm. The enzyme catalyses citrate = D-threo-isocitrate. It functions in the pathway carbohydrate metabolism; tricarboxylic acid cycle; isocitrate from oxaloacetate: step 2/2. Functionally, catalyzes the isomerization of citrate to isocitrate via cis-aconitate. Contributes to oxidative stress tolerance. Modulates cytosolic citrate metabolism during lipid mobilization. Required during seedling growth. This chain is Aconitate hydratase 3, mitochondrial, found in Arabidopsis thaliana (Mouse-ear cress).